A 131-amino-acid chain; its full sequence is Small ribosomal subunit protein uS11 (131 aa).

The protein belongs to the universal ribosomal protein uS11 family. Part of the 30S ribosomal subunit. Interacts with proteins S7 and S18. Binds to IF-3.

Functionally, located on the platform of the 30S subunit, it bridges several disparate RNA helices of the 16S rRNA. Forms part of the Shine-Dalgarno cleft in the 70S ribosome. This is Small ribosomal subunit protein uS11 from Natranaerobius thermophilus (strain ATCC BAA-1301 / DSM 18059 / JW/NM-WN-LF).